The sequence spans 143 residues: Putative pre-16S rRNA nuclease (143 aa).

This sequence belongs to the YqgF nuclease family.

The protein resides in the cytoplasm. Its function is as follows. Could be a nuclease involved in processing of the 5'-end of pre-16S rRNA. This Marinobacter nauticus (strain ATCC 700491 / DSM 11845 / VT8) (Marinobacter aquaeolei) protein is Putative pre-16S rRNA nuclease.